A 129-amino-acid polypeptide reads, in one-letter code: Small ribosomal subunit protein bS6 (129 aa).

This sequence belongs to the bacterial ribosomal protein bS6 family.

Binds together with bS18 to 16S ribosomal RNA. The sequence is that of Small ribosomal subunit protein bS6 from Microcystis aeruginosa (strain NIES-843 / IAM M-2473).